The chain runs to 929 residues: uncharacterized protein (929 aa).

The disordered stretch occupies residues 1-257 (MARKGKVNTL…SVLSSDDNDS (257 aa)). Over residues 23–34 (KQLENKILHSYE) the composition is skewed to basic and acidic residues. Composition is skewed to acidic residues over residues 35–50 (EESAGFDSEELEDNDE), 59–75 (SEDDEEIDSDEAFDEED), 107–117 (LNEEDDSDDSV), 133–144 (DENELVDLDTLL), and 188–220 (SESELTDSADNMNESDSESEIESSDSDHDDGEN). Ser-251, Ser-555, and Ser-557 each carry phosphoserine. The disordered stretch occupies residues 602–729 (DEMQAFEDEL…KADKKNHKLK (128 aa)). The segment covering 605–619 (QAFEDELAGVPNEDD) has biased composition (acidic residues). Residues 670 to 681 (NKPEMKEGQKKA) show a composition bias toward basic and acidic residues. The span at 696–711 (ETNPWLQVPDQRTSSA) shows a compositional bias: polar residues. The segment covering 712–729 (KKLDKNSSKADKKNHKLK) has biased composition (basic and acidic residues). Ser-758, Ser-760, and Ser-764 each carry phosphoserine. Over residues 805 to 820 (KEDWVQEDAPKEEDHS) the composition is skewed to basic and acidic residues. Residues 805–843 (KEDWVQEDAPKEEDHSLPGWGSWGGVGVKQRKTKPKVKK) are disordered. Residues 833-843 (KQRKTKPKVKK) show a composition bias toward basic residues.

To yeast YML093w.

The protein resides in the nucleus. It localises to the nucleolus. This is an uncharacterized protein from Schizosaccharomyces pombe (strain 972 / ATCC 24843) (Fission yeast).